We begin with the raw amino-acid sequence, 89 residues long: Small ribosomal subunit protein uS14 (89 aa).

Belongs to the universal ribosomal protein uS14 family. In terms of assembly, part of the 30S ribosomal subunit. Contacts proteins S3 and S10.

Its function is as follows. Binds 16S rRNA, required for the assembly of 30S particles and may also be responsible for determining the conformation of the 16S rRNA at the A site. The chain is Small ribosomal subunit protein uS14 from Leuconostoc mesenteroides subsp. mesenteroides (strain ATCC 8293 / DSM 20343 / BCRC 11652 / CCM 1803 / JCM 6124 / NCDO 523 / NBRC 100496 / NCIMB 8023 / NCTC 12954 / NRRL B-1118 / 37Y).